We begin with the raw amino-acid sequence, 469 residues long: NADH-quinone oxidoreductase subunit N (469 aa).

14 consecutive transmembrane segments (helical) span residues 2 to 22 (IALLPFILSLAATFINIFLCV), 28 to 48 (RYSINLNILFWVIIFISFFIV), 70 to 90 (FSFCFGVVLSALMIIFLISSF), 101 to 121 (EMFALASLAGFGLLAMSLSVE), 122 to 142 (LILTLIFLEVASISIYAMIAM), 157 to 177 (FLLSSFMSAFYLLGAAFVFGV), 194 to 214 (FLSIIGMILVLSMMFFKIAIF), 233 to 253 (GFLASAFKLASFAILIKLCFL), 261 to 281 (ILQGIFAILAILSMFAGNLLS), 290 to 310 (ILIAAGIVHSGYIFINLSSVG), 315 to 335 (IYPAIFYLSTYTIVVGFLFAI), 361 to 381 (AFAFTVICLSFIGFPYSVGFL), 398 to 418 (LAIFGIINTIFSVYYYLKIII), and 447 to 467 (ILFIILEGSGIFSIISFLNLF).

Belongs to the complex I subunit 2 family. As to quaternary structure, NDH-1 is composed of 14 different subunits. Subunits NuoA, H, J, K, L, M, N constitute the membrane sector of the complex.

The protein resides in the cell inner membrane. The catalysed reaction is a quinone + NADH + 5 H(+)(in) = a quinol + NAD(+) + 4 H(+)(out). Functionally, NDH-1 shuttles electrons from NADH, via FMN and iron-sulfur (Fe-S) centers, to quinones in the respiratory chain. The immediate electron acceptor for the enzyme in this species is believed to be ubiquinone. Couples the redox reaction to proton translocation (for every two electrons transferred, four hydrogen ions are translocated across the cytoplasmic membrane), and thus conserves the redox energy in a proton gradient. The sequence is that of NADH-quinone oxidoreductase subunit N from Campylobacter fetus subsp. fetus (strain 82-40).